We begin with the raw amino-acid sequence, 339 residues long: Ketol-acid reductoisomerase (NADP(+)) (339 aa).

One can recognise a KARI N-terminal Rossmann domain in the interval 1 to 182 (MRVYYDRDAD…GGGRSGVIET (182 aa)). NADP(+) is bound by residues 24-27 (YGSQ), Arg48, Ser51, Thr53, and 83-86 (DELQ). The active site involves His108. Residue Gly134 coordinates NADP(+). The region spanning 183 to 328 (TFKEECETDL…EKLRGMMPWI (146 aa)) is the KARI C-terminal knotted domain. 4 residues coordinate Mg(2+): Asp191, Glu195, Glu227, and Glu231. Position 252 (Ser252) interacts with substrate.

The protein belongs to the ketol-acid reductoisomerase family. Mg(2+) serves as cofactor.

It catalyses the reaction (2R)-2,3-dihydroxy-3-methylbutanoate + NADP(+) = (2S)-2-acetolactate + NADPH + H(+). The catalysed reaction is (2R,3R)-2,3-dihydroxy-3-methylpentanoate + NADP(+) = (S)-2-ethyl-2-hydroxy-3-oxobutanoate + NADPH + H(+). It functions in the pathway amino-acid biosynthesis; L-isoleucine biosynthesis; L-isoleucine from 2-oxobutanoate: step 2/4. It participates in amino-acid biosynthesis; L-valine biosynthesis; L-valine from pyruvate: step 2/4. In terms of biological role, involved in the biosynthesis of branched-chain amino acids (BCAA). Catalyzes an alkyl-migration followed by a ketol-acid reduction of (S)-2-acetolactate (S2AL) to yield (R)-2,3-dihydroxy-isovalerate. In the isomerase reaction, S2AL is rearranged via a Mg-dependent methyl migration to produce 3-hydroxy-3-methyl-2-ketobutyrate (HMKB). In the reductase reaction, this 2-ketoacid undergoes a metal-dependent reduction by NADPH to yield (R)-2,3-dihydroxy-isovalerate. In Brucella anthropi (strain ATCC 49188 / DSM 6882 / CCUG 24695 / JCM 21032 / LMG 3331 / NBRC 15819 / NCTC 12168 / Alc 37) (Ochrobactrum anthropi), this protein is Ketol-acid reductoisomerase (NADP(+)).